The primary structure comprises 505 residues: Pup deamidase/depupylase (505 aa).

Residue 6–10 (GTEVE) participates in ATP binding. 2 residues coordinate Mg(2+): glutamate 8 and tyrosine 93. Aspartate 95 (proton acceptor) is an active-site residue. Glutamate 100 contacts Mg(2+). 102–103 (SA) is an ATP binding site. A Mg(2+)-binding site is contributed by histidine 156. 2 residues coordinate ATP: asparagine 158 and arginine 240. Mg(2+) is bound at residue histidine 242.

The protein belongs to the Pup ligase/Pup deamidase family. Pup deamidase subfamily. Interacts with the prokaryotic ubiquitin-like protein Pup. ATP is required as a cofactor.

It catalyses the reaction [prokaryotic ubiquitin-like protein]-C-terminal-L-glutamine + H2O = [prokaryotic ubiquitin-like protein]-C-terminal-L-glutamate + NH4(+). Its pathway is protein degradation; proteasomal Pup-dependent pathway. In terms of biological role, specifically catalyzes the deamidation of the C-terminal glutamine of the prokaryotic ubiquitin-like protein Pup to glutamate, thereby rendering Pup competent for conjugation. Also displays depupylase (DPUP) activity, removing conjugated Pup from target proteins; is thus involved in the recycling of Pup and may function similarly to deubiquitinases (DUBs) in eukaryotes to prevent or promote proteasomal degradation of certain proteins. The sequence is that of Pup deamidase/depupylase (dop) from Mycobacterium tuberculosis (strain CDC 1551 / Oshkosh).